The chain runs to 332 residues: UPF0285 protein MK0078 (332 aa).

Belongs to the UPF0285 family.

The sequence is that of UPF0285 protein MK0078 from Methanopyrus kandleri (strain AV19 / DSM 6324 / JCM 9639 / NBRC 100938).